The following is a 36-amino-acid chain: Photosystem I reaction center subunit VIII (36 aa).

A helical transmembrane segment spans residues 6 to 26; that stretch reads LPSIFVPLVGLVFPAIAMASL.

This sequence belongs to the PsaI family.

It localises to the plastid. The protein resides in the chloroplast thylakoid membrane. In terms of biological role, may help in the organization of the PsaL subunit. The sequence is that of Photosystem I reaction center subunit VIII from Drimys granadensis.